Reading from the N-terminus, the 707-residue chain is U-box domain-containing protein 2 (707 aa).

One can recognise a U-box domain in the interval 239 to 313; sequence RVPSDFRCSL…ASWCETNNVY (75 aa). ARM repeat units lie at residues 453 to 492, 494 to 534, 536 to 575, 577 to 615, and 617 to 656; these read TDNR…NLSI, DNNK…SLSV, EEYK…NLSI, HENK…NLAT, and REGK…QLCT.

It carries out the reaction S-ubiquitinyl-[E2 ubiquitin-conjugating enzyme]-L-cysteine + [acceptor protein]-L-lysine = [E2 ubiquitin-conjugating enzyme]-L-cysteine + N(6)-ubiquitinyl-[acceptor protein]-L-lysine.. It functions in the pathway protein modification; protein ubiquitination. Its function is as follows. Functions as an E3 ubiquitin ligase. The polypeptide is U-box domain-containing protein 2 (PUB2) (Arabidopsis thaliana (Mouse-ear cress)).